We begin with the raw amino-acid sequence, 267 residues long: uncharacterized protein (267 aa).

A helical membrane pass occupies residues Phe30–Ile52.

It localises to the membrane. This is an uncharacterized protein from Aquifex aeolicus (strain VF5).